A 64-amino-acid chain; its full sequence is MSSHEGGKKKALKQPKKQAKEMDEEEKAFKQKQKEEQKKLEVLKAKVVGKGPLATGGIKKSGKK.

The interval 1 to 38 (MSSHEGGKKKALKQPKKQAKEMDEEEKAFKQKQKEEQK) is disordered. Over residues 27 to 38 (KAFKQKQKEEQK) the composition is skewed to basic and acidic residues.

Belongs to the TMA7 family.

This chain is Translation machinery-associated protein 7B, found in Homo sapiens (Human).